The chain runs to 517 residues: BTB/POZ domain-containing protein At3g49900 (517 aa).

A compositionally biased stretch (low complexity) spans 28-37; the sequence is SSSSSSLSLS. A disordered region spans residues 28–49; sequence SSSSSSLSLSPKQPINLSSSPS. Over residues 38–49 the composition is skewed to polar residues; sequence PKQPINLSSSPS. The BTB domain maps to 67 to 130; the sequence is PDVFVNVGGT…CYGAHIELTP (64 aa). In terms of domain architecture, NPH3 spans 224–307; the sequence is LPAGDFNVVA…VRAMLQEQLN (84 aa). Residues 409–456 form a disordered region; it reads ARSASFHCVHQPSNVNKTQRGDRGSVSNLSTTYRRRRASPPQAQPQKS.

This sequence belongs to the NPH3 family.

Its pathway is protein modification; protein ubiquitination. May act as a substrate-specific adapter of an E3 ubiquitin-protein ligase complex (CUL3-RBX1-BTB) which mediates the ubiquitination and subsequent proteasomal degradation of target proteins. The protein is BTB/POZ domain-containing protein At3g49900 of Arabidopsis thaliana (Mouse-ear cress).